The following is a 248-amino-acid chain: 2,3-bisphosphoglycerate-dependent phosphoglycerate mutase (248 aa).

Substrate-binding positions include 8–15, 21–22, R60, 87–90, K98, 114–115, and 183–184; these read RHGESTWN, TG, ERHY, RR, and GN. Catalysis depends on H9, which acts as the Tele-phosphohistidine intermediate. Catalysis depends on E87, which acts as the Proton donor/acceptor.

The protein belongs to the phosphoglycerate mutase family. BPG-dependent PGAM subfamily. Homodimer.

It carries out the reaction (2R)-2-phosphoglycerate = (2R)-3-phosphoglycerate. Its pathway is carbohydrate degradation; glycolysis; pyruvate from D-glyceraldehyde 3-phosphate: step 3/5. Catalyzes the interconversion of 2-phosphoglycerate and 3-phosphoglycerate. The sequence is that of 2,3-bisphosphoglycerate-dependent phosphoglycerate mutase from Paraburkholderia phytofirmans (strain DSM 17436 / LMG 22146 / PsJN) (Burkholderia phytofirmans).